The sequence spans 97 residues: Protein 9b (97 aa).

Residues 8-97 form the 9b domain; the sequence is VPPALHLVDP…PDEFVVVTAK (90 aa).

As to quaternary structure, homodimer.

Its subcellular location is the host cytoplasmic vesicle membrane. The protein resides in the host cytoplasm. This is Protein 9b from Bat coronavirus 279/2005 (BtCoV).